A 79-amino-acid polypeptide reads, in one-letter code: Large ribosomal subunit protein uL29 (79 aa).

This sequence belongs to the universal ribosomal protein uL29 family.

The protein is Large ribosomal subunit protein uL29 of Tropheryma whipplei (strain TW08/27) (Whipple's bacillus).